Consider the following 584-residue polypeptide: BEL1-like homeodomain protein 8 (584 aa).

Residues 266-282 (SRFLEPAQKMLEEFCIS) form an SR/KY domain region. The interval 292 to 317 (ESTSMEDDDDDDDNLSGFSSSSEPLE) is disordered. Acidic residues predominate over residues 295 to 305 (SMEDDDDDDDN). The BELL domain stretch occupies residues 316 to 387 (LEPKNRLKKA…ALRTAIAEHV (72 aa)). Positions 424-486 (IWRPQRGLPE…NARVRLWKPM (63 aa)) form a DNA-binding region, homeobox. The segment at 503-529 (TSHNIEPSNRPNTVSSPSHEQTLTGLS) is disordered.

This sequence belongs to the TALE/BELL homeobox family. May form heterodimeric complex with the TALE/KNOX proteins STM and KNAT1/BP.

It is found in the nucleus. Required for specifying floral primordia and establishing early internode patterning events during inflorescence development. The sequence is that of BEL1-like homeodomain protein 8 (BLH8) from Arabidopsis thaliana (Mouse-ear cress).